The following is a 193-amino-acid chain: Probable nicotinate-nucleotide adenylyltransferase (193 aa).

Belongs to the NadD family.

The enzyme catalyses nicotinate beta-D-ribonucleotide + ATP + H(+) = deamido-NAD(+) + diphosphate. The protein operates within cofactor biosynthesis; NAD(+) biosynthesis; deamido-NAD(+) from nicotinate D-ribonucleotide: step 1/1. Its function is as follows. Catalyzes the reversible adenylation of nicotinate mononucleotide (NaMN) to nicotinic acid adenine dinucleotide (NaAD). The sequence is that of Probable nicotinate-nucleotide adenylyltransferase from Borreliella afzelii (strain PKo) (Borrelia afzelii).